Reading from the N-terminus, the 191-residue chain is MNNSKLKQYVQLVQTANQNFNLTGLKTEGEIYEHLVQEIIELFNEYDSYFDHKKVADLGSGNGCPGVILKLLFPQIKTLDLIDSKHKKVNFLKEVIQTLELNNTQALCARIENHTEQYDTLCSRGLGSIIEVNAFALKLLKPNGIIFHIKQSLDQYLEFEDSEQKDQFKPLFFKFFHGKRQQILIAMKKNV.

Residues Gly59, 111–112, and Arg124 contribute to the S-adenosyl-L-methionine site; that span reads IE.

The protein belongs to the methyltransferase superfamily. RNA methyltransferase RsmG family.

Its subcellular location is the cytoplasm. Functionally, specifically methylates the N7 position of a guanine in 16S rRNA. The chain is Ribosomal RNA small subunit methyltransferase G from Mycoplasma pneumoniae (strain ATCC 29342 / M129 / Subtype 1) (Mycoplasmoides pneumoniae).